The sequence spans 1604 residues: Transposon Ty1-DR4 Gag-Pol polyprotein (1604 aa).

3 stretches are compositionally biased toward polar residues: residues 1 to 23 (MESQ…SVTS), 48 to 60 (TKAN…TPAS), and 127 to 152 (QSQF…GNTF). Disordered stretches follow at residues 1-93 (MESQ…MMTQ), 126-174 (PQSQ…PPPM), and 352-421 (GSRN…SKST). Low complexity predominate over residues 153–165 (TDSSSADSDMTST). Residues 299–401 (NNGIHINNKV…NSKSKTARAH (103 aa)) form an RNA-binding region. Over residues 402-418 (NVSTSNNSPSTDNDSIS) the composition is skewed to low complexity. Serine 416 is subject to Phosphoserine. Aspartate 461 serves as the catalytic For protease activity; shared with dimeric partner. Positions 583 to 640 (NVHTSESTRKYPYPFIHRMLAHANAQTIRYSLKNNTITYFNESDVDWSSAIDYQCPDC) are integrase-type zinc finger-like. The 176-residue stretch at 660-835 (NSYEPFQYLH…AGLDISTLLP (176 aa)) folds into the Integrase catalytic domain. Residues aspartate 671 and aspartate 736 each coordinate Mg(2+). Disordered regions lie at residues 956 to 1087 (SKAV…ETEK), 1092 to 1111 (RSPS…NIVP), and 1130 to 1187 (DLPL…DNET). Positions 960-969 (SPTDSTPPST) are enriched in low complexity. A compositionally biased stretch (polar residues) spans 1005 to 1015 (STPQISNIEST). The span at 1038 to 1053 (ESSHASKSKDFRHSDS) shows a compositional bias: basic and acidic residues. Composition is skewed to polar residues over residues 1054-1082 (YSEN…QISD) and 1101-1111 (PENNSSHNIVP). Positions 1178-1212 (KKRSLEDNETEIKVSRDTWNTKNMRSLEPPRSKKR) match the Bipartite nuclear localization signal motif. In terms of domain architecture, Reverse transcriptase Ty1/copia-type spans 1338 to 1476 (NNYYITQLDI…DILGLEIKYQ (139 aa)). The Mg(2+) site is built by aspartate 1346, aspartate 1427, and aspartate 1428.

As to quaternary structure, the capsid protein forms a homotrimer, from which the VLPs are assembled. The protease is a homodimer, whose active site consists of two apposed aspartic acid residues. Post-translationally, initially, virus-like particles (VLPs) are composed of the structural unprocessed proteins Gag and Gag-Pol, and also contain the host initiator methionine tRNA (tRNA(i)-Met) which serves as a primer for minus-strand DNA synthesis, and a dimer of genomic Ty RNA. Processing of the polyproteins occurs within the particle and proceeds by an ordered pathway, called maturation. First, the protease (PR) is released by autocatalytic cleavage of the Gag-Pol polyprotein yielding capsid protein p45 and a Pol-p154 precursor protein. This cleavage is a prerequisite for subsequent processing of Pol-p154 at the remaining sites to release the mature structural and catalytic proteins. Maturation takes place prior to the RT reaction and is required to produce transposition-competent VLPs.

It localises to the cytoplasm. It is found in the nucleus. The catalysed reaction is DNA(n) + a 2'-deoxyribonucleoside 5'-triphosphate = DNA(n+1) + diphosphate. It catalyses the reaction Endonucleolytic cleavage to 5'-phosphomonoester.. Capsid protein (CA) is the structural component of the virus-like particle (VLP), forming the shell that encapsulates the retrotransposons dimeric RNA genome. The particles are assembled from trimer-clustered units and there are holes in the capsid shells that allow for the diffusion of macromolecules. CA also has nucleocapsid-like chaperone activity, promoting primer tRNA(i)-Met annealing to the multipartite primer-binding site (PBS), dimerization of Ty1 RNA and initiation of reverse transcription. Functionally, the aspartyl protease (PR) mediates the proteolytic cleavages of the Gag and Gag-Pol polyproteins after assembly of the VLP. Its function is as follows. Reverse transcriptase/ribonuclease H (RT) is a multifunctional enzyme that catalyzes the conversion of the retro-elements RNA genome into dsDNA within the VLP. The enzyme displays a DNA polymerase activity that can copy either DNA or RNA templates, and a ribonuclease H (RNase H) activity that cleaves the RNA strand of RNA-DNA heteroduplexes during plus-strand synthesis and hydrolyzes RNA primers. The conversion leads to a linear dsDNA copy of the retrotransposon that includes long terminal repeats (LTRs) at both ends. In terms of biological role, integrase (IN) targets the VLP to the nucleus, where a subparticle preintegration complex (PIC) containing at least integrase and the newly synthesized dsDNA copy of the retrotransposon must transit the nuclear membrane. Once in the nucleus, integrase performs the integration of the dsDNA into the host genome. This Saccharomyces cerevisiae (strain ATCC 204508 / S288c) (Baker's yeast) protein is Transposon Ty1-DR4 Gag-Pol polyprotein (TY1B-DR4).